The chain runs to 718 residues: Mitochondrial potassium channel ATP-binding subunit (718 aa).

A mitochondrion-targeting transit peptide spans methionine 1–phenylalanine 25. A run of 3 helical transmembrane segments spans residues leucine 128 to isoleucine 148, threonine 179 to leucine 199, and leucine 279 to leucine 299. Residues valine 133 to arginine 420 form the ABC transmembrane type-1 domain. The ABC transporter domain occupies valine 455–arginine 692. ATP is bound at residue glycine 490–threonine 497. Residues alanine 697–serine 718 are disordered.

It belongs to the ABC transporter superfamily. ABCB family. Multidrug resistance exporter (TC 3.A.1.201) subfamily. The mitochondrial potassium channel (mitoK(ATP)) is composed of 4 subunits of CCDC51/MITOK and 4 subunits of ABCB8/MITOSUR. Physically interacts with PAAT. Interacts with Neuropilin-1 (NRP1) in mitochondria.

The protein resides in the mitochondrion inner membrane. With respect to regulation, channel activity inhibited by ATP via ABCB8/MITOSUR subunit. ATP-binding subunit of the mitochondrial ATP-gated potassium channel (mitoK(ATP)). Together with pore-forming subunit CCDC51/MITOK of the mitoK(ATP) channel, mediates ATP-dependent potassium currents across the mitochondrial inner membrane. An increase in ATP intracellular levels closes the channel, inhibiting K(+) transport, whereas a decrease in ATP levels enhances K(+) uptake in the mitochondrial matrix. Plays a role in mitochondrial iron transport. Required for maintenance of normal cardiac function, possibly by influencing mitochondrial iron export and regulating the maturation of cytosolic iron sulfur cluster-containing enzymes. This Pongo abelii (Sumatran orangutan) protein is Mitochondrial potassium channel ATP-binding subunit (ABCB8).